Reading from the N-terminus, the 511-residue chain is Lysine--tRNA ligase (511 aa).

The tract at residues 1 to 20 (MQKNTSQPTNTNEQSNQPSL) is disordered. Residues glutamate 422 and glutamate 429 each coordinate Mg(2+).

This sequence belongs to the class-II aminoacyl-tRNA synthetase family. In terms of assembly, homodimer. Mg(2+) serves as cofactor.

It is found in the cytoplasm. It catalyses the reaction tRNA(Lys) + L-lysine + ATP = L-lysyl-tRNA(Lys) + AMP + diphosphate. The sequence is that of Lysine--tRNA ligase from Chlorobium chlorochromatii (strain CaD3).